We begin with the raw amino-acid sequence, 226 residues long: Glutathione peroxidase 3 (226 aa).

The N-terminal stretch at 1 to 24 is a signal peptide; sequence MARILRASCLLSLLLAGFVPPGRG. Residue U73 is part of the active site. Position 73 (U73) is a non-standard amino acid, selenocysteine.

The protein belongs to the glutathione peroxidase family. As to quaternary structure, homotetramer. Secreted in plasma.

It is found in the secreted. The enzyme catalyses 2 glutathione + H2O2 = glutathione disulfide + 2 H2O. The catalysed reaction is tert-butyl hydroperoxide + 2 glutathione = tert-butanol + glutathione disulfide + H2O. Protects cells and enzymes from oxidative damage, by catalyzing the reduction of hydrogen peroxide, lipid peroxides and organic hydroperoxide, by glutathione. In Rattus norvegicus (Rat), this protein is Glutathione peroxidase 3.